Here is a 916-residue protein sequence, read N- to C-terminus: Protein translocase subunit SecA (916 aa).

ATP-binding positions include Gln87, 105 to 109 (GEGKT), and Asp507. Residues Cys900, Cys902, Cys911, and His912 each contribute to the Zn(2+) site.

It belongs to the SecA family. Monomer and homodimer. Part of the essential Sec protein translocation apparatus which comprises SecA, SecYEG and auxiliary proteins SecDF-YajC and YidC. Zn(2+) is required as a cofactor.

The protein resides in the cell inner membrane. It localises to the cytoplasm. The enzyme catalyses ATP + H2O + cellular proteinSide 1 = ADP + phosphate + cellular proteinSide 2.. Functionally, part of the Sec protein translocase complex. Interacts with the SecYEG preprotein conducting channel. Has a central role in coupling the hydrolysis of ATP to the transfer of proteins into and across the cell membrane, serving both as a receptor for the preprotein-SecB complex and as an ATP-driven molecular motor driving the stepwise translocation of polypeptide chains across the membrane. This chain is Protein translocase subunit SecA, found in Neisseria gonorrhoeae (strain ATCC 700825 / FA 1090).